Reading from the N-terminus, the 309-residue chain is Pyrroline-5-carboxylate reductase 1, mitochondrial (309 aa).

Serine 2 is modified (N-acetylserine). Residues isoleucine 6 to leucine 11 and serine 34 contribute to the NADP(+) site. NADPH-binding residues include alanine 8, glutamine 10, leucine 11, serine 34, aspartate 36, asparagine 56, valine 70, lysine 71, and alanine 97. NADP(+) contacts are provided by residues asparagine 56, alanine 69–proline 72, and cysteine 95–alanine 97. Glutamate 164 contributes to the L-proline binding site. Asparagine 230 contacts NADPH. Residues alanine 237 and threonine 238 each coordinate L-proline. Phosphoserine occurs at positions 278 and 301.

It belongs to the pyrroline-5-carboxylate reductase family. In terms of assembly, homodecamer; composed of 5 homodimers. Interacts with LTO1. In terms of tissue distribution, highly expressed in osteoblasts and skin.

The protein localises to the mitochondrion. The catalysed reaction is L-proline + NADP(+) = (S)-1-pyrroline-5-carboxylate + NADPH + 2 H(+). The enzyme catalyses L-proline + NAD(+) = (S)-1-pyrroline-5-carboxylate + NADH + 2 H(+). The protein operates within amino-acid biosynthesis; L-proline biosynthesis; L-proline from L-glutamate 5-semialdehyde: step 1/1. Its function is as follows. Oxidoreductase that catalyzes the last step in proline biosynthesis, which corresponds to the reduction of pyrroline-5-carboxylate to L-proline using NAD(P)H. At physiologic concentrations, has higher specific activity in the presence of NADH. Involved in the cellular response to oxidative stress. The polypeptide is Pyrroline-5-carboxylate reductase 1, mitochondrial (Mus musculus (Mouse)).